We begin with the raw amino-acid sequence, 338 residues long: Phenylalanine--tRNA ligase alpha subunit (338 aa).

Glu252 contributes to the Mg(2+) binding site.

The protein belongs to the class-II aminoacyl-tRNA synthetase family. Phe-tRNA synthetase alpha subunit type 1 subfamily. Tetramer of two alpha and two beta subunits. The cofactor is Mg(2+).

Its subcellular location is the cytoplasm. It catalyses the reaction tRNA(Phe) + L-phenylalanine + ATP = L-phenylalanyl-tRNA(Phe) + AMP + diphosphate + H(+). In Ectopseudomonas mendocina (strain ymp) (Pseudomonas mendocina), this protein is Phenylalanine--tRNA ligase alpha subunit.